Reading from the N-terminus, the 636-residue chain is 1-phosphatidylinositol 4,5-bisphosphate phosphodiesterase zeta-1 (636 aa).

Residues 35-70 (CNTIHVKCIFKDNDRLKQGRITIEEFRTIYRIIAHR) form the EF-hand domain. Positions 155-299 (QDMTHPLSDY…LKFKILVRNK (145 aa)) constitute a PI-PLC X-box domain. Catalysis depends on residues H170 and H215. The tract at residues 311–338 (KGFDKHGQVQECEEEEEAEQEEEENEVR) is disordered. Positions 318–345 (QVQECEEEEEAEQEEEENEVRDSEILDI) form a coiled coil. The span at 321–336 (ECEEEEEAEQEEEENE) shows a compositional bias: acidic residues. Positions 375-491 (LSDLVIYTKV…GYILKPHFLR (117 aa)) constitute a PI-PLC Y-box domain. Residues 491-617 (RDGKSIFNPN…KGYRRVPLFS (127 aa)) enclose the C2 domain.

Interacts via its C2 domain with PtdIns(3)P and, to a lesser extent, PtdIns(5)P in vitro. It depends on Ca(2+) as a cofactor. As to expression, expressed specifically in testis.

It localises to the nucleus. The protein localises to the cytoplasm. It is found in the perinuclear region. The catalysed reaction is a 1,2-diacyl-sn-glycero-3-phospho-(1D-myo-inositol-4,5-bisphosphate) + H2O = 1D-myo-inositol 1,4,5-trisphosphate + a 1,2-diacyl-sn-glycerol + H(+). Its function is as follows. The production of the second messenger molecules diacylglycerol (DAG) and inositol 1,4,5-trisphosphate (IP3) is mediated by activated phosphatidylinositol-specific phospholipase C enzymes. In vitro, hydrolyzes PtdIns(4,5)P2 in a Ca(2+)-dependent manner. Triggers intracellular Ca(2+) oscillations in oocytes solely during M phase and is involved in inducing oocyte activation and initiating embryonic development up to the blastocyst stage. Is therefore a strong candidate for the egg-activating soluble sperm factor that is transferred from the sperm into the egg cytoplasm following gamete membrane fusion. May exert an inhibitory effect on phospholipase-C-coupled processes that depend on calcium ions and protein kinase C, including CFTR trafficking and function. This is 1-phosphatidylinositol 4,5-bisphosphate phosphodiesterase zeta-1 from Sus scrofa (Pig).